The primary structure comprises 118 residues: Nucleoid-associated protein TM_0687 (118 aa).

It belongs to the YbaB/EbfC family. Homodimer.

The protein localises to the cytoplasm. The protein resides in the nucleoid. Its function is as follows. Binds to DNA and alters its conformation. May be involved in regulation of gene expression, nucleoid organization and DNA protection. The polypeptide is Nucleoid-associated protein TM_0687 (Thermotoga maritima (strain ATCC 43589 / DSM 3109 / JCM 10099 / NBRC 100826 / MSB8)).